The chain runs to 90 residues: Acylphosphatase (90 aa).

The 86-residue stretch at 5–90 (GCKVIVSGIV…YQKTNDFIAC (86 aa)) folds into the Acylphosphatase-like domain. Residues Arg-20 and Asn-38 contribute to the active site.

The protein belongs to the acylphosphatase family.

The catalysed reaction is an acyl phosphate + H2O = a carboxylate + phosphate + H(+). The chain is Acylphosphatase (acyP) from Psychromonas ingrahamii (strain DSM 17664 / CCUG 51855 / 37).